The following is a 299-amino-acid chain: Protoheme IX farnesyltransferase 1 (299 aa).

9 consecutive transmembrane segments (helical) span residues 24–44 (VVAL…PGVP), 46–66 (AAVV…AAMV), 97–117 (LLVA…CCNA), 118–138 (LTAW…TLLL), 146–166 (IVIG…AVNG), 170–190 (AFAL…FWAL), 217–237 (LSIV…VALG), 239–259 (AGAI…FLAV), and 278–298 (IWYL…LIPL).

Belongs to the UbiA prenyltransferase family. Protoheme IX farnesyltransferase subfamily.

It localises to the cell inner membrane. The enzyme catalyses heme b + (2E,6E)-farnesyl diphosphate + H2O = Fe(II)-heme o + diphosphate. It functions in the pathway porphyrin-containing compound metabolism; heme O biosynthesis; heme O from protoheme: step 1/1. In terms of biological role, converts heme B (protoheme IX) to heme O by substitution of the vinyl group on carbon 2 of heme B porphyrin ring with a hydroxyethyl farnesyl side group. This is Protoheme IX farnesyltransferase 1 from Chromobacterium violaceum (strain ATCC 12472 / DSM 30191 / JCM 1249 / CCUG 213 / NBRC 12614 / NCIMB 9131 / NCTC 9757 / MK).